Consider the following 636-residue polypeptide: DNA mismatch repair protein MutL (636 aa).

Residues 341 to 420 form a disordered region; sequence APLINKPEQQ…PGAEEYTPEA (80 aa). Basic and acidic residues predominate over residues 348 to 358; that stretch reads EQQKLDFDQVR.

Belongs to the DNA mismatch repair MutL/HexB family.

Its function is as follows. This protein is involved in the repair of mismatches in DNA. It is required for dam-dependent methyl-directed DNA mismatch repair. May act as a 'molecular matchmaker', a protein that promotes the formation of a stable complex between two or more DNA-binding proteins in an ATP-dependent manner without itself being part of a final effector complex. The protein is DNA mismatch repair protein MutL of Bacillus licheniformis (strain ATCC 14580 / DSM 13 / JCM 2505 / CCUG 7422 / NBRC 12200 / NCIMB 9375 / NCTC 10341 / NRRL NRS-1264 / Gibson 46).